Here is a 486-residue protein sequence, read N- to C-terminus: ATP-dependent 6-phosphofructokinase (486 aa).

ATP contacts are provided by residues Gly105, Arg171–Gly172, and Gly196–Thr199. Residue Asp197 participates in Mg(2+) binding. Residues Thr225–Asp227, Met270–Arg272, Glu323, and Tyr378–Arg381 each bind substrate. Asp227 (proton acceptor) is an active-site residue. A Peroxisomal targeting signal motif is present at residues Ser484–Val486.

The protein belongs to the phosphofructokinase type A (PFKA) family. PPi-dependent PFK group II subfamily. Atypical ATP-dependent clade 'X' sub-subfamily. Homotetramer. Mg(2+) is required as a cofactor.

It localises to the glycosome. It carries out the reaction beta-D-fructose 6-phosphate + ATP = beta-D-fructose 1,6-bisphosphate + ADP + H(+). Its pathway is carbohydrate degradation; glycolysis; D-glyceraldehyde 3-phosphate and glycerone phosphate from D-glucose: step 3/4. Allosterically activated by AMP. Catalyzes the phosphorylation of D-fructose 6-phosphate to fructose 1,6-bisphosphate by ATP, the first committing step of glycolysis. The sequence is that of ATP-dependent 6-phosphofructokinase from Leishmania donovani.